Here is a 78-residue protein sequence, read N- to C-terminus: Biotin synthase auxiliary protein (78 aa).

The protein belongs to the BsaP family. Iron-sulfur cluster serves as cofactor.

Required for the activity of the biotin synthase BioB. The sequence is that of Biotin synthase auxiliary protein from Mycolicibacterium smegmatis (strain ATCC 700084 / mc(2)155) (Mycobacterium smegmatis).